Reading from the N-terminus, the 605-residue chain is Sulfite reductase [NADPH] flavoprotein alpha-component (605 aa).

The Flavodoxin-like domain occupies 68–206; sequence VTVLYGSQTG…PAAEWLEGVL (139 aa). FMN is bound by residues 74–78, 121–126, and 154–185; these read SQTGN, STHGEG, and VLAL…KRIS. The disordered stretch occupies residues 213–234; that stretch reads GGGSAAPAPAAASQTGESSYSR. One can recognise an FAD-binding FR-type domain in the interval 235 to 454; the sequence is TNPFRAEVLE…VQHNQNFKLP (220 aa). 392-395 serves as a coordination point for FAD; sequence RLYS. NADP(+)-binding positions include aspartate 495 and 525 to 533; that span reads SRDTEEKVY.

Alpha(8)-beta(8). The alpha component is a flavoprotein, the beta component is a hemoprotein. It depends on FAD as a cofactor. Requires FMN as cofactor.

The enzyme catalyses hydrogen sulfide + 3 NADP(+) + 3 H2O = sulfite + 3 NADPH + 4 H(+). Its pathway is sulfur metabolism; hydrogen sulfide biosynthesis; hydrogen sulfide from sulfite (NADPH route): step 1/1. Its function is as follows. Component of the sulfite reductase complex that catalyzes the 6-electron reduction of sulfite to sulfide. This is one of several activities required for the biosynthesis of L-cysteine from sulfate. The flavoprotein component catalyzes the electron flow from NADPH -&gt; FAD -&gt; FMN to the hemoprotein component. In Bacillus subtilis (strain 168), this protein is Sulfite reductase [NADPH] flavoprotein alpha-component (cysJ).